Consider the following 537-residue polypeptide: MDDDYMMLDDDYGEEEDENYSEDDNYSEAEVDLQPVTSTKSTSQVIKKESLVAAQKEILVRVMELLSVKENQARTLLIYYQWNVEKLFSVFADQGKDRMFSCAGLTVFVPSLVTSKKTMKCDVCMEDDLPSNVMTRMECGHRFCNDCWIGHFTVKINEGESKRILCMAHECKAICDEDVVRKLVSPELADRYDRFLIESYVEDNNMVKWCPSKPHCGSAIRKIEDGHDVVEVGCSCGLQFCFSCLSESHSPCSCLMWKLWKKKCEDESETVNWITVNTKLCPKCSKPIQKRDGCNLMTCKCGQHFCWLCGQATGRDHTYTSIAGHSCGRYKDEKVRQLERAQRDLDRYTHYHYRYKAHIDSLKLEDKLRKSILEKAVSNSETKDQKVFKEYSWVTDAVNRLFISRRILSQSYPFAFYMFGEELFKDEMSEKEREIKKNLFEDQQQQLEGNVEKLSKILEEPFDEYDHEKVVEMMRHLTNLTAVVDNLCKEMYECIENELLGPIQFGNHNIAPYRSKGIEQATEFCAESSDCGSSGSS.

Residues 1–30 are disordered; that stretch reads MDDDYMMLDDDYGEEEDENYSEDDNYSEAE. The tract at residues 117–331 is TRIAD supradomain; that stretch reads KTMKCDVCME…IAGHSCGRYK (215 aa). The Zn(2+) site is built by Cys121, Cys124, Cys139, His141, Cys144, Cys147, Cys166, Cys171, Cys210, Cys216, Cys234, Cys236, Cys241, Cys244, His249, Cys254, Cys281, and Cys284. The RING-type 1 zinc-finger motif lies at 121–171; sequence CDVCMEDDLPSNVMTRMECGHRFCNDCWIGHFTVKINEGESKRILCMAHEC. The IBR-type zinc finger occupies 190–254; the sequence is DRYDRFLIES…LSESHSPCSC (65 aa). The RING-type 2; atypical zinc-finger motif lies at 281–309; the sequence is CPKCSKPIQKRDGCNLMTCKCGQHFCWLC. Cys294 is a catalytic residue. Zn(2+)-binding residues include Cys299, Cys301, Cys306, Cys309, His317, and Cys327.

It belongs to the RBR family. Ariadne subfamily. Zn(2+) is required as a cofactor. In terms of tissue distribution, ubiquitous.

It carries out the reaction [E2 ubiquitin-conjugating enzyme]-S-ubiquitinyl-L-cysteine + [acceptor protein]-L-lysine = [E2 ubiquitin-conjugating enzyme]-L-cysteine + [acceptor protein]-N(6)-ubiquitinyl-L-lysine.. Its pathway is protein modification; protein ubiquitination. Functionally, might act as an E3 ubiquitin-protein ligase, or as part of E3 complex, which accepts ubiquitin from specific E2 ubiquitin-conjugating enzymes and then transfers it to substrates. This is Probable E3 ubiquitin-protein ligase ARI3 (ARI3) from Arabidopsis thaliana (Mouse-ear cress).